Reading from the N-terminus, the 327-residue chain is DNA-directed RNA polymerase subunit alpha (327 aa).

The segment at 1–231 (MIYQMQMPAK…DHIMYFANFS (231 aa)) is alpha N-terminal domain (alpha-NTD). Positions 247-327 (DEFESMRKLL…GMDITRYQMK (81 aa)) are alpha C-terminal domain (alpha-CTD).

The protein belongs to the RNA polymerase alpha chain family. As to quaternary structure, homodimer. The RNAP catalytic core consists of 2 alpha, 1 beta, 1 beta' and 1 omega subunit. When a sigma factor is associated with the core the holoenzyme is formed, which can initiate transcription.

It carries out the reaction RNA(n) + a ribonucleoside 5'-triphosphate = RNA(n+1) + diphosphate. Functionally, DNA-dependent RNA polymerase catalyzes the transcription of DNA into RNA using the four ribonucleoside triphosphates as substrates. The protein is DNA-directed RNA polymerase subunit alpha of Chlorobium phaeobacteroides (strain DSM 266 / SMG 266 / 2430).